The sequence spans 308 residues: Cytochrome b (308 aa).

Helical transmembrane passes span 1–21 (FGSL…LLAT), 45–66 (WLIR…YLHI), 81–101 (WNTG…GYVL), and 146–166 (FFAL…IHFT). Histidine 65 lines the heme b pocket. Positions 150 and 164 each coordinate heme b. Histidine 169 serves as a coordination point for a ubiquinone. 3 consecutive transmembrane segments (helical) span residues 194–214 (VKDI…ALFS), 256–276 (LGGV…PFLH), and 288–308 (LSQF…WVGS).

This sequence belongs to the cytochrome b family. As to quaternary structure, the cytochrome bc1 complex contains 11 subunits: 3 respiratory subunits (MT-CYB, CYC1 and UQCRFS1), 2 core proteins (UQCRC1 and UQCRC2) and 6 low-molecular weight proteins (UQCRH/QCR6, UQCRB/QCR7, UQCRQ/QCR8, UQCR10/QCR9, UQCR11/QCR10 and a cleavage product of UQCRFS1). This cytochrome bc1 complex then forms a dimer. Heme b is required as a cofactor.

The protein localises to the mitochondrion inner membrane. In terms of biological role, component of the ubiquinol-cytochrome c reductase complex (complex III or cytochrome b-c1 complex) that is part of the mitochondrial respiratory chain. The b-c1 complex mediates electron transfer from ubiquinol to cytochrome c. Contributes to the generation of a proton gradient across the mitochondrial membrane that is then used for ATP synthesis. In Colaptes rupicola (Southern Andean flicker), this protein is Cytochrome b (MT-CYB).